The primary structure comprises 220 residues: MELYLDTANVAEVERLARIFPIAGVTTNPSIIAASKESIWEVLPRLQKAIGDEGILFAQTMSRDAQGMVKEAKHLRDAIPGIVVKIPVTSEGLAAIKMLKKEGITTLGTAVYSAAQGLLAALAGAKYVAPYVNRVDAQGGDGIRTVQELQALLEMHAPESMVLAASFKTPRQALDCLLAGCESITLPLDVAQQMLNTPAVESAIEKFEHDWNAAFGTTHL.

Lys-85 serves as the catalytic Schiff-base intermediate with substrate.

Belongs to the transaldolase family. Type 3A subfamily. In terms of assembly, homodecamer.

The protein resides in the cytoplasm. It carries out the reaction beta-D-fructose 6-phosphate = dihydroxyacetone + D-glyceraldehyde 3-phosphate. Functionally, catalyzes the reversible formation of fructose 6-phosphate from dihydroxyacetone and D-glyceraldehyde 3-phosphate via an aldolization reaction. The chain is Fructose-6-phosphate aldolase 2 (fsaB) from Escherichia coli O6:H1 (strain CFT073 / ATCC 700928 / UPEC).